The sequence spans 689 residues: Glycine--tRNA ligase beta subunit (689 aa).

Belongs to the class-II aminoacyl-tRNA synthetase family. As to quaternary structure, tetramer of two alpha and two beta subunits.

The protein localises to the cytoplasm. It catalyses the reaction tRNA(Gly) + glycine + ATP = glycyl-tRNA(Gly) + AMP + diphosphate. This Escherichia coli (strain K12 / MC4100 / BW2952) protein is Glycine--tRNA ligase beta subunit.